The chain runs to 458 residues: 3-isopropylmalate dehydratase large subunit (458 aa).

The [4Fe-4S] cluster site is built by cysteine 339, cysteine 399, and cysteine 402.

Belongs to the aconitase/IPM isomerase family. LeuC type 1 subfamily. As to quaternary structure, heterodimer of LeuC and LeuD. Requires [4Fe-4S] cluster as cofactor.

The catalysed reaction is (2R,3S)-3-isopropylmalate = (2S)-2-isopropylmalate. It participates in amino-acid biosynthesis; L-leucine biosynthesis; L-leucine from 3-methyl-2-oxobutanoate: step 2/4. Catalyzes the isomerization between 2-isopropylmalate and 3-isopropylmalate, via the formation of 2-isopropylmaleate. This chain is 3-isopropylmalate dehydratase large subunit, found in Lactococcus lactis subsp. cremoris (strain MG1363).